The sequence spans 356 residues: Tyrosine recombinase XerS (356 aa).

Positions 16–121 (LMPWFVLEYY…ALSCLYKYLT (106 aa)) constitute a Core-binding (CB) domain. The Tyr recombinase domain maps to 169–354 (KFLDYVENEY…VNDEQKNALD (186 aa)). Active-site residues include R210, K234, H306, R309, and H332. Residue Y341 is the O-(3'-phospho-DNA)-tyrosine intermediate of the active site.

This sequence belongs to the 'phage' integrase family. XerS subfamily.

Its subcellular location is the cytoplasm. With respect to regulation, ftsK is required for recombination. In terms of biological role, site-specific tyrosine recombinase, which acts by catalyzing the cutting and rejoining of the recombining DNA molecules. Essential to convert dimers of the bacterial chromosome into monomers to permit their segregation at cell division. This Streptococcus thermophilus (strain ATCC BAA-250 / LMG 18311) protein is Tyrosine recombinase XerS.